Here is a 319-residue protein sequence, read N- to C-terminus: Acetyl-coenzyme A carboxylase carboxyl transferase subunit alpha (319 aa).

The CoA carboxyltransferase C-terminal domain maps to 35-296; that stretch reads NIDEEVHRLR…KAQLLADLAD (262 aa).

This sequence belongs to the AccA family. In terms of assembly, acetyl-CoA carboxylase is a heterohexamer composed of biotin carboxyl carrier protein (AccB), biotin carboxylase (AccC) and two subunits each of ACCase subunit alpha (AccA) and ACCase subunit beta (AccD).

Its subcellular location is the cytoplasm. It carries out the reaction N(6)-carboxybiotinyl-L-lysyl-[protein] + acetyl-CoA = N(6)-biotinyl-L-lysyl-[protein] + malonyl-CoA. It participates in lipid metabolism; malonyl-CoA biosynthesis; malonyl-CoA from acetyl-CoA: step 1/1. Functionally, component of the acetyl coenzyme A carboxylase (ACC) complex. First, biotin carboxylase catalyzes the carboxylation of biotin on its carrier protein (BCCP) and then the CO(2) group is transferred by the carboxyltransferase to acetyl-CoA to form malonyl-CoA. This is Acetyl-coenzyme A carboxylase carboxyl transferase subunit alpha from Escherichia coli O139:H28 (strain E24377A / ETEC).